Consider the following 402-residue polypeptide: Multidrug resistance protein MdtH (402 aa).

Residues 1–12 (MSRVSQARNLGK) are Cytoplasmic-facing. Residues 13 to 33 (YFLLIDNMLVVLGFFVVFPLI) traverse the membrane as a helical segment. The Periplasmic portion of the chain corresponds to 34 to 98 (SIRFVDQMGW…GFATMGIAHE (65 aa)). Residues 99–116 (PWLLWFSCLLSGLGGTLF) form a helical membrane-spanning segment. Residues 117–138 (DPPRSALVVKLIRPQQRGRFFS) lie on the Cytoplasmic side of the membrane. Residues 139 to 159 (LLMMQDSAGAVIGALLGSWLL) form a helical membrane-spanning segment. Residues 160-164 (QYDFR) are Periplasmic-facing. The chain crosses the membrane as a helical span at residues 165 to 185 (LVCATGAVLFVLCAAFNAWLL). The Cytoplasmic segment spans residues 186-213 (PAWKLSTVRTPVREGMTRVMRDKRFVTY). A helical transmembrane segment spans residues 214-234 (VLTLAGYYMLAVQVMLMLPIM). At 235 to 243 (VNDVAGAPS) the chain is on the periplasmic side. The chain crosses the membrane as a helical span at residues 244–264 (AVKWMYAIEACLSLTLLYPIA). Over 265–276 (RWSEKHFRLEHR) the chain is Cytoplasmic. A helical transmembrane segment spans residues 277 to 297 (LMAGLLIMSLSMMPVGMVSGL). The Periplasmic portion of the chain corresponds to 298–299 (QQ). A helical membrane pass occupies residues 300 to 320 (LFTLICLFYIGSIIAEPARET). At 321-339 (LSASLADARARGSYMGFSR) the chain is on the cytoplasmic side. The chain crosses the membrane as a helical span at residues 340–360 (LGLAIGGAIGYIGGGWLFDLG). Residues 361 to 367 (KSVHQPE) are Periplasmic-facing. A helical transmembrane segment spans residues 368–388 (LPWMMLGIIGIFTFLALGWQF). Topologically, residues 389–402 (SQKRAARRLLERDA) are cytoplasmic.

The protein belongs to the major facilitator superfamily. DHA1 family. MdtH (TC 2.A.1.2.21) subfamily.

It is found in the cell inner membrane. In terms of biological role, confers resistance to norfloxacin and enoxacin. This is Multidrug resistance protein MdtH from Escherichia coli O157:H7.